Consider the following 473-residue polypeptide: MASVSWRAVAVAMVVVLLSLQWFAKGYPEEDLVVRLPGQPTVGFKQYAGYVDVDVKAGRSLFYYYVEAVKQPDSKPLTLWLNGGPGCSSIGGGAFTELGPFYPTGDGRGLRVNSMSWNKASHLLFVESPAGVGWSYSNKSSDYNTGDKSTANDMLVFLLRWFEKFPKLKSRDLFLTGESYAGHYIPQLADAILSYNSHSSGFKFNIKGVAIGNPLLKLDRDSPATYEFFWSHGMISDELKLTITSQCDFDDYTFASPHNVSTACNEAISETENIITEYVNNYDVLLDVCYPSIVQQELRLKKMATKMSMGVDVCMTYERRFYFNLPEVQKALHANRTHLPYSWSMCSGVLNYSDIDGNIDMLPILKRIILNKTPIWIFSGDQDSVVPFGGSRTLVRELAQDLNFKTTVPYGAWFHKSQVGGWAIEYGKLLTFATVRGAAHMVPYAQPSRALHLFSSFVSGRRLPNNTHSSTDE.

The first 26 residues, 1–26 (MASVSWRAVAVAMVVVLLSLQWFAKG), serve as a signal peptide directing secretion. 3 disulfide bridges follow: C87–C346, C247–C264, and C289–C314. N-linked (GlcNAc...) asparagine glycosylation is present at N138. S179 is a catalytic residue. An N-linked (GlcNAc...) asparagine glycan is attached at N259. N335 and N351 each carry an N-linked (GlcNAc...) asparagine glycan. Active-site residues include D383 and H440. N-linked (GlcNAc...) asparagine glycosylation is present at N465.

This sequence belongs to the peptidase S10 family. In terms of tissue distribution, expression not detected.

The protein resides in the secreted. Probable carboxypeptidase. The protein is Serine carboxypeptidase-like 42 (SCPL42) of Arabidopsis thaliana (Mouse-ear cress).